Here is a 576-residue protein sequence, read N- to C-terminus: uncharacterized protein (576 aa).

Belongs to the chlamydial CPn_0065/CT_288/TC_0561 family.

This is an uncharacterized protein from Chlamydia pneumoniae (Chlamydophila pneumoniae).